The sequence spans 130 residues: Protein ApaG (130 aa).

One can recognise an ApaG domain in the interval 3-127; that stretch reads RALTRDIEVV…FSLDSPGLLR (125 aa). Residues 63-83 are disordered; that stretch reads EVTGPGVVGEQPRLSPGDTYE.

The sequence is that of Protein ApaG from Rhizobium etli (strain ATCC 51251 / DSM 11541 / JCM 21823 / NBRC 15573 / CFN 42).